The sequence spans 549 residues: MALAAAAAAAAAGVSQAAVLGFLQEHGGKVRNSELLSRFKPLLDAGDPRGRAARRDRFKQFVNNVAVVKELDGVKFVVLRKKPRPPEPEPAPFGPPGAAAQPSKPTSTVLPRSASAPGAPPLVRVPRPVEPPGDLGLPTEPQDTPGGPASEPAQPPGERSADPPLPALELAQATERPSADAAPPPRAPSEAASPCSDPPDAEPGPGAAKGPPQQKPCMLPVRCVPAPATLRLRAEEPGLRRQLSEEPSPRSSPLLLRRLSVEESGLGLGLGPGRSPHLRRLSRAGPRLLSPDAEELPAAPPPSAVPLEPSEHEWLVRTAGGRWTHQLHGLLLRDRGLAAKRDFMSGFTALHWAAKSGDGEMALQLVEVARRSGAPVDVNARSHGGYTPLHLAALHGHEDAAVLLVVRLGAQVHVRDHSGRRAYQYLRPGSSYALRRLLGDPGLRGTTEPDATGGGSGSLAARRPVQVAATILSSTTSAFLGVLADDLMLQDLARGLKKSSSFSKFLSASPMAPRKKTKIRGGLPAFSEISRRPTPGPLAGLVPSLPPTT.

A signal peptide spans Met-1–Ala-17. 2 disordered regions span residues Lys-82 to Leu-219 and Glu-235 to Leu-256. Residues Pro-203–Pro-216 show a composition bias toward low complexity. Residues Glu-235–Ser-248 show a composition bias toward basic and acidic residues. Residue Ser-260 is modified to Phosphoserine. ANK repeat units lie at residues Ser-345 to Ala-374 and Gly-384 to Val-414. The tract at residues Pro-513–Thr-549 is disordered.

This sequence belongs to the SOWAH family.

This is Ankyrin repeat domain-containing protein SOWAHA (SOWAHA) from Homo sapiens (Human).